The primary structure comprises 419 residues: Peptide chain release factor subunit 1 (419 aa).

Belongs to the eukaryotic release factor 1 family. Heterodimer of two subunits, one of which binds GTP.

It is found in the cytoplasm. Functionally, directs the termination of nascent peptide synthesis (translation) in response to the termination codons UAA, UAG and UGA. The polypeptide is Peptide chain release factor subunit 1 (Methanococcus maripaludis (strain C7 / ATCC BAA-1331)).